Reading from the N-terminus, the 103-residue chain is ATP-dependent Clp protease adapter protein ClpS (103 aa).

This sequence belongs to the ClpS family. As to quaternary structure, binds to the N-terminal domain of the chaperone ClpA.

Its function is as follows. Involved in the modulation of the specificity of the ClpAP-mediated ATP-dependent protein degradation. This is ATP-dependent Clp protease adapter protein ClpS from Nitrosomonas eutropha (strain DSM 101675 / C91 / Nm57).